The sequence spans 423 residues: Growth hormone-releasing hormone receptor (423 aa).

The N-terminal stretch at 1-22 (MDGLMWATRILCLLSLCGVTLG) is a signal peptide. Over 23–130 (HLHLECDFIT…KEKSYFSTVK (108 aa)) the chain is Extracellular. Disulfide bonds link Cys-41-Cys-64, Cys-55-Cys-96, and Cys-78-Cys-112. 2 N-linked (GlcNAc...) asparagine glycosylation sites follow: Asn-49 and Asn-50. A helical transmembrane segment spans residues 131–151 (IIYTTGHSISIVALCVAIAIL). The Cytoplasmic segment spans residues 152 to 167 (VALRRLHCPRNYIHTQ). A helical membrane pass occupies residues 168–188 (LFATFILKASAVFLKDAAIFQ). At 189–210 (GDSTDHCSMSTVLCKVSVAISH) the chain is on the extracellular side. The helical transmembrane segment at 211–231 (LATMTNFSWLLAEAVYLSCLL) threads the bilayer. Residues 232–240 (ASTSPRSKP) are Cytoplasmic-facing. A helical transmembrane segment spans residues 241-261 (AFWWLVLAGWGLPVLCTGTWV). The Extracellular segment spans residues 262–283 (GCKLAFEDTECWDLDNSSPCWW). A helical transmembrane segment spans residues 284–304 (IIKGPIVLSVGVNFGLFLNII). Residues 305–331 (CILLRKLEPAQGGLHTRAQYWRLSKST) lie on the Cytoplasmic side of the membrane. The helical transmembrane segment at 332–352 (LLLIPLFGIHYIIFNFLPDSA) threads the bilayer. Over 353 to 357 (GLDIR) the chain is Extracellular. A helical membrane pass occupies residues 358 to 378 (VPLELGLGSFQGFIVAVLYCF). Topologically, residues 379–423 (LNQEVRTEISRKWYGHDPELLPARRTCTEWTTPPRSRLKVLTSEC) are cytoplasmic.

The protein belongs to the G-protein coupled receptor 2 family. Pituitary gland.

It localises to the cell membrane. Functionally, receptor for GRF, coupled to G proteins which activate adenylyl cyclase. Stimulates somatotroph cell growth, growth hormone gene transcription and growth hormone secretion. The polypeptide is Growth hormone-releasing hormone receptor (Ghrhr) (Mus musculus (Mouse)).